The chain runs to 180 residues: Major urinary protein 1 (180 aa).

Residues 1-18 (MKMLLLLCLGLTLVCVHA) form the signal peptide. C82 and C175 form a disulfide bridge.

It belongs to the calycin superfamily. Lipocalin family. As to expression, abundant in the urine of adult male mice but absent from that of females.

The protein resides in the secreted. Binds pheromones that are released from drying urine of males. These pheromones affect the sexual behavior of females. This is Major urinary protein 1 (Mup1) from Mus musculus (Mouse).